Consider the following 215-residue polypeptide: Myelin protein zero-like protein 2 (215 aa).

Positions 1 to 26 (MYGKSSTRAVLLLLGIQLTALWPIAA) are cleaved as a signal peptide. Residues 27–141 (VEIYTSRVLE…DGVIGEIRLS (115 aa)) form the Ig-like V-type domain. Over 27–154 (VEIYTSRVLE…TVRFSEIHFL (128 aa)) the chain is Extracellular. N-linked (GlcNAc...) asparagine glycans are attached at residues asparagine 39 and asparagine 118. Cysteines 47 and 123 form a disulfide. The helical transmembrane segment at 155-175 (ALAIGSACALMIIIVIVVVLF) threads the bilayer. Residues 176–215 (QHYRKKRWAERAHKVVEIKSKEEERLNQEKKVSVYLEDTD) are Cytoplasmic-facing.

It belongs to the myelin P0 protein family. In terms of tissue distribution, widely expressed. In fetal tissues, highest expression in the inner ear. In adult tissues, highest levels in thymus and lung.

It is found in the membrane. Functionally, mediates homophilic cell-cell adhesion. The protein is Myelin protein zero-like protein 2 (MPZL2) of Homo sapiens (Human).